Reading from the N-terminus, the 338-residue chain is Glycerol-3-phosphate dehydrogenase [NAD(P)+] (338 aa).

The NADPH site is built by S14, Y15, H35, and K109. K109, G138, and T140 together coordinate sn-glycerol 3-phosphate. Residue A142 coordinates NADPH. The sn-glycerol 3-phosphate site is built by K194, D247, S257, R258, and N259. K194 functions as the Proton acceptor in the catalytic mechanism. Residue R258 coordinates NADPH. NADPH is bound by residues V282 and E284.

Belongs to the NAD-dependent glycerol-3-phosphate dehydrogenase family.

Its subcellular location is the cytoplasm. It carries out the reaction sn-glycerol 3-phosphate + NAD(+) = dihydroxyacetone phosphate + NADH + H(+). The catalysed reaction is sn-glycerol 3-phosphate + NADP(+) = dihydroxyacetone phosphate + NADPH + H(+). The protein operates within membrane lipid metabolism; glycerophospholipid metabolism. In terms of biological role, catalyzes the reduction of the glycolytic intermediate dihydroxyacetone phosphate (DHAP) to sn-glycerol 3-phosphate (G3P), the key precursor for phospholipid synthesis. In Shewanella frigidimarina (strain NCIMB 400), this protein is Glycerol-3-phosphate dehydrogenase [NAD(P)+].